The chain runs to 93 residues: Small ribosomal subunit protein uS19 (93 aa).

This sequence belongs to the universal ribosomal protein uS19 family.

Its function is as follows. Protein S19 forms a complex with S13 that binds strongly to the 16S ribosomal RNA. This chain is Small ribosomal subunit protein uS19, found in Micrococcus luteus (strain ATCC 4698 / DSM 20030 / JCM 1464 / CCM 169 / CCUG 5858 / IAM 1056 / NBRC 3333 / NCIMB 9278 / NCTC 2665 / VKM Ac-2230) (Micrococcus lysodeikticus).